The chain runs to 320 residues: Malate dehydrogenase (320 aa).

Residues 10–15 and D34 contribute to the NAD(+) site; that span reads GAGQIG. Positions 83 and 89 each coordinate substrate. NAD(+)-binding positions include N96 and 119 to 121; that span reads ITN. N121 and R152 together coordinate substrate. Catalysis depends on H176, which acts as the Proton acceptor.

Belongs to the LDH/MDH superfamily. MDH type 3 family.

It carries out the reaction (S)-malate + NAD(+) = oxaloacetate + NADH + H(+). In terms of biological role, catalyzes the reversible oxidation of malate to oxaloacetate. This chain is Malate dehydrogenase, found in Methylorubrum populi (strain ATCC BAA-705 / NCIMB 13946 / BJ001) (Methylobacterium populi).